We begin with the raw amino-acid sequence, 437 residues long: MASLFSSVLLSLCLLSSLFLSNANAKPKLGFTADLIHRDSPKSPFYNPMETSSQRLRNAIHRSVNRVFHFTEKDNTPQPQIDLTSNSGEYLMNVSIGTPPFPIMAIADTGSDLLWTQCAPCDDCYTQVDPLFDPKTSSTYKDVSCSSSQCTALENQASCSTNDNTCSYSLSYGDNSYTKGNIAVDTLTLGSSDTRPMQLKNIIIGCGHNNAGTFNKKGSGIVGLGGGPVSLIKQLGDSIDGKFSYCLVPLTSKKDQTSKINFGTNAIVSGSGVVSTPLIAKASQETFYYLTLKSISVGSKQIQYSGSDSESSEGNIIIDSGTTLTLLPTEFYSELEDAVASSIDAEKKQDPQSGLSLCYSATGDLKVPVITMHFDGADVKLDSSNAFVQVSEDLVCFAFRGSPSFSIYGNVAQMNFLVGYDTVSKTVSFKPTDCAKM.

A signal peptide spans 1-25; that stretch reads MASLFSSVLLSLCLLSSLFLSNANA. A propeptide spans 26-73 (activation peptide); the sequence is KPKLGFTADLIHRDSPKSPFYNPMETSSQRLRNAIHRSVNRVFHFTEK. The Peptidase A1 domain maps to 90 to 430; sequence YLMNVSIGTP…DTVSKTVSFK (341 aa). The N-linked (GlcNAc...) asparagine glycan is linked to Asn-93. Catalysis depends on residues Asp-108 and Asp-319.

The protein belongs to the peptidase A1 family.

It localises to the secreted. It is found in the extracellular space. Its subcellular location is the apoplast. Its function is as follows. Involved in salicylic acid-dependent inducible resistance responses. May release an endogenous peptide elicitor required for the activation of inducible resistance mechanisms. Possesses protease activity in vitro. The chain is Aspartic proteinase CDR1 (CDR1) from Arabidopsis thaliana (Mouse-ear cress).